Reading from the N-terminus, the 126-residue chain is Protein ApaG (126 aa).

Positions 2–126 constitute an ApaG domain; it reads SQVESPIKIK…FRLAVPGIFQ (125 aa).

This is Protein ApaG from Shewanella frigidimarina (strain NCIMB 400).